Here is a 371-residue protein sequence, read N- to C-terminus: Archaeal glycosylation protein Q (371 aa).

The segment at 19-39 (QRSDGSMPAGHNGPYHDPETP) is disordered.

Its subcellular location is the cytoplasm. It participates in cell surface structure biogenesis; S-layer biogenesis. Its function is as follows. Putative isomerase involved in the N-glycosylation pathway. Required for the appearance of the methyl ester of hexuronic acid found at position four of the pentasaccharide N-linked to the S-layer glycoprotein. Either involved in preparing the third sugar for attachment of the fourth pentasaccharide subunit or processing the fourth sugar prior to its addition to the lipid-linked trisaccharide. The protein is Archaeal glycosylation protein Q (aglQ) of Haloferax volcanii (strain ATCC 29605 / DSM 3757 / JCM 8879 / NBRC 14742 / NCIMB 2012 / VKM B-1768 / DS2) (Halobacterium volcanii).